The following is a 22-amino-acid chain: Caerin-3.4 (22 aa).

K22 carries the lysine amide modification.

As to expression, expressed by the skin parotoid and/or rostral glands.

Its subcellular location is the secreted. Functionally, antibacterial peptide, that adopts an alpha helical conformation which can disrupt bacterial membranes. Each caerin displays a different antimicrobial specificity. This Ranoidea caerulea (Green tree frog) protein is Caerin-3.4.